The sequence spans 133 residues: GVTFDDGAYTGIREINFEYNSETAIGGLRVTYDLNGMPFVAEDHKSFITGFKPVKISLEFPSEYIVEVSGYVGKVEGYTVIRSLTFKTNKQTYGPYGVTNGTPFSLPIENGLIVGFKGSIGYWLDYFSIYLSL.

Residues 1 to 133 (GVTFDDGAYT…LDYFSIYLSL (133 aa)) enclose the Jacalin-type lectin domain.

It belongs to the jacalin lectin family. In terms of assembly, formed of four alpha chains and four beta chains.

Functionally, D-galactose-specific lectin, binds the T-antigen structure Gal-beta1,3-GalNAc. In Maclura pomifera (Osage orange), this protein is Agglutinin alpha chain.